A 367-amino-acid chain; its full sequence is Alginate lyase (367 aa).

Positions 1–27 are cleaved as a signal peptide; it reads MKTSHLIRIALPGALAAALLASQVSQA. Substrate is bound by residues 65–66, 138–139, and tyrosine 256; these read SK and HT.

This sequence belongs to the polysaccharide lyase 5 family.

It is found in the periplasm. The enzyme catalyses Eliminative cleavage of alginate to give oligosaccharides with 4-deoxy-alpha-L-erythro-hex-4-enuronosyl groups at their non-reducing ends and beta-D-mannuronate at their reducing end.. Its function is as follows. Catalyzes the depolymerization of alginate by cleaving the beta-1,4 glycosidic bond between two adjacent sugar residues via a beta-elimination mechanism. May serve to degrade mislocalized alginate that is trapped in the periplasmic space. Acts preferentially on non-acetylated alginate or its precursor mannuronan. Is able to catalyze cleavage adjacent to either mannuronate or guluronate residues in alginate. Exhaustive digestion of alginate by AlgL generates dimeric and trimeric products. In addition to its enzymatic function, AlgL appears to be required for alginate export, maybe as part of a multi-protein alginate-secretion complex. This is Alginate lyase from Pseudomonas aeruginosa (strain ATCC 15692 / DSM 22644 / CIP 104116 / JCM 14847 / LMG 12228 / 1C / PRS 101 / PAO1).